The following is a 340-amino-acid chain: MSNIDKERAIAAALAQIEKSYGKGSVMKLGQRPNVDIEAISTGSLGLDIALGIGGVPKGRIIEIFGPESSGKTTLTLHLIAESQKKGGTCAFIDAEHALDPAYAKKLGVNIDELIISQPDTGEQALEIADTLIRSGGIDMIIIDSVAALVPKSEIEGEMGDAQMASQARLMSQALRKLTASINRTNCITVFINQIRMKIGVMFGSPETTTGGNALKFYASVRIDIRRIGSIKDKEEVIGSQTKVKVVKNKVSPPFKTADFDIMYGSGISKEGEIIDLGVKLEIIEKSGSWFSYNKIRIGQGRENVKQYLKEHPQISNEIEKIIREKSSAITNINLDQTEE.

66 to 73 (GPESSGKT) provides a ligand contact to ATP.

Belongs to the RecA family.

It localises to the cytoplasm. Its function is as follows. Can catalyze the hydrolysis of ATP in the presence of single-stranded DNA, the ATP-dependent uptake of single-stranded DNA by duplex DNA, and the ATP-dependent hybridization of homologous single-stranded DNAs. It interacts with LexA causing its activation and leading to its autocatalytic cleavage. This is Protein RecA from Rickettsia prowazekii (strain Madrid E).